A 1093-amino-acid polypeptide reads, in one-letter code: Leukemia inhibitory factor receptor (1093 aa).

The signal sequence occupies residues 1–43 (MGAFSWWRQPSWMADNKRGRMTPSLPWLLSALTLLHLMMHVNG). Residues 44–829 (LKRGVQQDLK…SMFVVTKENS (786 aa)) lie on the Extracellular side of the membrane. The region spanning 45–127 (KRGVQQDLKC…QSKFTLNEKD (83 aa)) is the Fibronectin type-III 1 domain. 2 cysteine pairs are disulfide-bonded: Cys54–Cys64 and Cys81–Cys89. Residues Asn165, Asn200, Asn239, and Asn262 are each glycosylated (N-linked (GlcNAc...) asparagine). Intrachain disulfides connect Cys209–Cys266 and Cys337–Cys347. 5 Fibronectin type-III domains span residues 331–428 (VPQK…ERVA), 431–530 (VPIS…TEAT), 534–625 (GPDT…IPND), 623–715 (PNDD…IGYI), and 720–829 (PIVA…KENS). N-linked (GlcNAc...) asparagine glycosylation is found at Asn386, Asn403, Asn422, Asn441, Asn454, and Asn477. A disulfide bond links Cys462 and Cys507. Residues 515–519 (WSKWS) carry the WSXWS motif motif. 6 N-linked (GlcNAc...) asparagine glycosylation sites follow: Asn568, Asn648, Asn659, Asn676, Asn725, and Asn783. Residues 830-850 (VGLIIAILIPVAVAVIVGVVT) traverse the membrane as a helical segment. Residues 851-1093 (SILCYRKREW…TNFFQNKPND (243 aa)) are Cytoplasmic-facing. The short motif at 865-873 (FYPDIPNPE) is the Box 1 motif element. Disordered stretches follow at residues 908 to 941 (ESRS…ENQA) and 1003 to 1093 (LPIN…KPND). 2 positions are modified to phosphoserine: Ser923 and Ser1040. Polar residues-rich tracts occupy residues 1028 to 1063 (ANVN…NSRQ) and 1082 to 1093 (SFTNFFQNKPND).

The protein belongs to the type I cytokine receptor family. Type 2 subfamily. In terms of assembly, heterodimer composed of LIFR and IL6ST. The heterodimer formed by LIFR and IL6ST interacts with the complex formed by CNTF and CNTFR.

It is found in the cell membrane. In terms of biological role, signal-transducing molecule. May have a common pathway with IL6ST. The soluble form inhibits the biological activity of LIF by blocking its binding to receptors on target cells. This Rattus norvegicus (Rat) protein is Leukemia inhibitory factor receptor (Lifr).